The primary structure comprises 352 residues: PDZ and LIM domain protein 2 (352 aa).

Positions 1 to 84 (MALTVDVAGP…PLRLQLDRSQ (84 aa)) constitute a PDZ domain. Disordered regions lie at residues 69-95 (IRQS…NGDS) and 108-141 (VRTH…PPPF). Residues 81–95 (DRSQAASPGQTNGDS) show a composition bias toward polar residues. Low complexity predominate over residues 117 to 135 (SLRSSYSSPTSLSPRAGSP). Phosphoserine is present on S124. T126 is modified (phosphothreonine). 10 positions are modified to phosphoserine: S127, S129, S134, S137, S143, S161, S197, S203, S213, and S266. Disordered stretches follow at residues 170–214 (LSYS…GGSL) and 253–275 (ERGG…PASR). The span at 258 to 275 (PAFLPSSLSPQSSLPASR) shows a compositional bias: low complexity. Positions 284–344 (HTCEKCSTSI…EKHARQRYSA (61 aa)) constitute an LIM zinc-binding domain.

In terms of assembly, interacts with alpha-actinins ACTN1 and ACTN4, FLNA and MYH9. Interacts (via LIM zinc-binding domain) with MKRN2.

The protein localises to the cytoplasm. It is found in the cytoskeleton. Probable adapter protein located at the actin cytoskeleton that promotes cell attachment. Necessary for the migratory capacity of epithelial cells. Overexpression enhances cell adhesion to collagen and fibronectin and suppresses anchorage independent growth. May contribute to tumor cell migratory capacity. This Macaca fascicularis (Crab-eating macaque) protein is PDZ and LIM domain protein 2 (PDLIM2).